The sequence spans 311 residues: Pyrimidine-specific ribonucleoside hydrolase RihA (311 aa).

Histidine 240 is a catalytic residue.

Belongs to the IUNH family. RihA subfamily.

Functionally, hydrolyzes cytidine or uridine to ribose and cytosine or uracil, respectively. The sequence is that of Pyrimidine-specific ribonucleoside hydrolase RihA from Salmonella paratyphi A (strain ATCC 9150 / SARB42).